A 757-amino-acid chain; its full sequence is Chloride anion exchanger (757 aa).

Residues 1–71 (MIEAIGNQYV…SWLPAYKIKE (71 aa)) lie on the Cytoplasmic side of the membrane. Residues 72–92 (WLLSDIVSGISTGLVAVLQGL) traverse the membrane as a helical segment. Residue Ala-93 is a topological domain, extracellular. A helical transmembrane segment spans residues 94–114 (FALLVNIPPAYGLYAAFFPVI). The Cytoplasmic segment spans residues 115 to 124 (TYFFLGTSRH). A helical transmembrane segment spans residues 125 to 145 (ISVGPFPVLSMMVGVVVTRVV). Topologically, residues 146–176 (SDPNASSELSSSSTENDSFIEEKVMVAASVT) are extracellular. N-linked (GlcNAc...) asparagine glycosylation is found at Asn-149 and Asn-161. The helical transmembrane segment at 177–197 (VLSGIIQLLLGVLQVGFVVIY) threads the bilayer. Residues 198–201 (LSES) are Cytoplasmic-facing. Residues 202–222 (LISGFTTAAAIHVLVSQLKFM) traverse the membrane as a helical segment. The Extracellular portion of the chain corresponds to 223–250 (LQLPVPAYSDPFSIFKVLESVFTQIQKT). Residues 251-271 (NIADLVTSVIILVVVFVFKEI) traverse the membrane as a helical segment. The Cytoplasmic portion of the chain corresponds to 272–278 (NQRYRSK). The helical transmembrane segment at 279-299 (LPVPIPIELIMTVIATGVSYG) threads the bilayer. The Extracellular segment spans residues 300-335 (CNFEDRFGVAVVGNMSLGFQPPITPSVEVFQDTIGD). The chain crosses the membrane as a helical span at residues 336–356 (SFGIAIVGFAVAFSVASVYSL). Residues 357–367 (KYDYPIDGNQE) are Cytoplasmic-facing. Residues 368-388 (LIALGVSNIFTGAFKGFAGST) traverse the membrane as a helical segment. Topologically, residues 389-404 (ALSRSGVQESTGGKTQ) are extracellular. Residues 405-425 (VAGLLSAVIVLIVIVAIGFLL) traverse the membrane as a helical segment. At 426–462 (QPLQKSVLAALALGNLKGMLMQFAEIGRLWKKDKYDC) the chain is on the cytoplasmic side. Residues 463 to 483 (LIWIMTFIFAIVLGLGLGLAA) traverse the membrane as a helical segment. Topologically, residues 484–757 (SVAFQLLTIV…ECQVPVETKF (274 aa)) are extracellular. The STAS domain maps to 518–713 (NYAEVYEPEG…LTIHDAILHI (196 aa)). The PDZ-binding motif lies at 754-757 (ETKF).

The protein belongs to the SLC26A/SulP transporter (TC 2.A.53) family. Interacts with PDZK1. Interacts with CFTR, SLC26A6 and NHERF1. Interacts (via PDZ-binding motif) with NHERF4 (via the third PDZ domain). This interaction leads to decreased expression of SLC26A3 on the cell membrane resulting in its reduced exchanger activity. N-glycosylation is required for efficient cell surface expression, and protection from proteolytic degradation. As to expression, expressed in spermatogenic cells. Expressed at high levels in cecum and colon and at lower levels in small intestine.

It localises to the apical cell membrane. Its subcellular location is the membrane. The protein resides in the cell membrane. It carries out the reaction hydrogencarbonate(in) + 2 chloride(out) = hydrogencarbonate(out) + 2 chloride(in). Its function is as follows. Mediates chloride-bicarbonate exchange with a chloride bicarbonate stoichiometry of 2:1 in the intestinal epithelia. Plays a role in the chloride and bicarbonate homeostasis during sperm epididymal maturation and capacitation. The chain is Chloride anion exchanger (Slc26a3) from Mus musculus (Mouse).